The chain runs to 379 residues: Chaperone protein DnaJ (379 aa).

The region spanning 5 to 70 (DYYELLEVSR…QKRAAYDQFG (66 aa)) is the J domain. Residues 135 to 213 (GKEVEITVPR…CHGQGRVRES (79 aa)) form a CR-type zinc finger. 8 residues coordinate Zn(2+): Cys148, Cys151, Cys165, Cys168, Cys187, Cys190, Cys201, and Cys204. 4 CXXCXGXG motif repeats span residues 148 to 155 (CTVCEGSG), 165 to 172 (CETCQGMG), 187 to 194 (CPTCHGEG), and 201 to 208 (CASCHGQG).

It belongs to the DnaJ family. As to quaternary structure, homodimer. It depends on Zn(2+) as a cofactor.

The protein localises to the cytoplasm. Its function is as follows. Participates actively in the response to hyperosmotic and heat shock by preventing the aggregation of stress-denatured proteins and by disaggregating proteins, also in an autonomous, DnaK-independent fashion. Unfolded proteins bind initially to DnaJ; upon interaction with the DnaJ-bound protein, DnaK hydrolyzes its bound ATP, resulting in the formation of a stable complex. GrpE releases ADP from DnaK; ATP binding to DnaK triggers the release of the substrate protein, thus completing the reaction cycle. Several rounds of ATP-dependent interactions between DnaJ, DnaK and GrpE are required for fully efficient folding. Also involved, together with DnaK and GrpE, in the DNA replication of plasmids through activation of initiation proteins. The chain is Chaperone protein DnaJ from Legionella pneumophila (strain Lens).